The sequence spans 227 residues: Cytochrome c oxidase subunit 2 (227 aa).

At 1–14 the chain is on the mitochondrial intermembrane side; sequence MAHAAQMGLQDATS. The helical transmembrane segment at 15 to 45 threads the bilayer; it reads PIMEELISFHDHALMIIFLISFLVLYALFLT. Residues 46–59 are Mitochondrial matrix-facing; the sequence is LTTKLTNTNITDAQ. A helical membrane pass occupies residues 60 to 87; that stretch reads EMETVWTILPAIILVLIALPSLRILYLT. At 88–227 the chain is on the mitochondrial intermembrane side; that stretch reads DEINDPSFTI…IFEMGPVFTL (140 aa). Cu cation-binding residues include His-161, Cys-196, Glu-198, Cys-200, His-204, and Met-207. Position 198 (Glu-198) interacts with Mg(2+).

Belongs to the cytochrome c oxidase subunit 2 family. In terms of assembly, component of the cytochrome c oxidase (complex IV, CIV), a multisubunit enzyme composed of 14 subunits. The complex is composed of a catalytic core of 3 subunits MT-CO1, MT-CO2 and MT-CO3, encoded in the mitochondrial DNA, and 11 supernumerary subunits COX4I, COX5A, COX5B, COX6A, COX6B, COX6C, COX7A, COX7B, COX7C, COX8 and NDUFA4, which are encoded in the nuclear genome. The complex exists as a monomer or a dimer and forms supercomplexes (SCs) in the inner mitochondrial membrane with NADH-ubiquinone oxidoreductase (complex I, CI) and ubiquinol-cytochrome c oxidoreductase (cytochrome b-c1 complex, complex III, CIII), resulting in different assemblies (supercomplex SCI(1)III(2)IV(1) and megacomplex MCI(2)III(2)IV(2)). Found in a complex with TMEM177, COA6, COX18, COX20, SCO1 and SCO2. Interacts with TMEM177 in a COX20-dependent manner. Interacts with COX20. Interacts with COX16. The cofactor is Cu cation.

It localises to the mitochondrion inner membrane. It carries out the reaction 4 Fe(II)-[cytochrome c] + O2 + 8 H(+)(in) = 4 Fe(III)-[cytochrome c] + 2 H2O + 4 H(+)(out). In terms of biological role, component of the cytochrome c oxidase, the last enzyme in the mitochondrial electron transport chain which drives oxidative phosphorylation. The respiratory chain contains 3 multisubunit complexes succinate dehydrogenase (complex II, CII), ubiquinol-cytochrome c oxidoreductase (cytochrome b-c1 complex, complex III, CIII) and cytochrome c oxidase (complex IV, CIV), that cooperate to transfer electrons derived from NADH and succinate to molecular oxygen, creating an electrochemical gradient over the inner membrane that drives transmembrane transport and the ATP synthase. Cytochrome c oxidase is the component of the respiratory chain that catalyzes the reduction of oxygen to water. Electrons originating from reduced cytochrome c in the intermembrane space (IMS) are transferred via the dinuclear copper A center (CU(A)) of subunit 2 and heme A of subunit 1 to the active site in subunit 1, a binuclear center (BNC) formed by heme A3 and copper B (CU(B)). The BNC reduces molecular oxygen to 2 water molecules using 4 electrons from cytochrome c in the IMS and 4 protons from the mitochondrial matrix. The protein is Cytochrome c oxidase subunit 2 (MT-CO2) of Symphalangus syndactylus (Siamang).